We begin with the raw amino-acid sequence, 219 residues long: ATP-dependent Clp protease proteolytic subunit (219 aa).

The tract at residues 1–22 is disordered; it reads MPVGVPKVPFLNPNPDPEPDSV. S116 serves as the catalytic Nucleophile. The active site involves H141.

The protein belongs to the peptidase S14 family. As to quaternary structure, component of the chloroplastic Clp protease core complex.

It is found in the plastid. The protein resides in the chloroplast stroma. The catalysed reaction is Hydrolysis of proteins to small peptides in the presence of ATP and magnesium. alpha-casein is the usual test substrate. In the absence of ATP, only oligopeptides shorter than five residues are hydrolyzed (such as succinyl-Leu-Tyr-|-NHMec, and Leu-Tyr-Leu-|-Tyr-Trp, in which cleavage of the -Tyr-|-Leu- and -Tyr-|-Trp bonds also occurs).. Its function is as follows. Cleaves peptides in various proteins in a process that requires ATP hydrolysis. Has a chymotrypsin-like activity. Plays a major role in the degradation of misfolded proteins. This is ATP-dependent Clp protease proteolytic subunit from Pelargonium hortorum (Common geranium).